We begin with the raw amino-acid sequence, 670 residues long: Zinc finger protein 526 (670 aa).

3 consecutive C2H2-type zinc fingers follow at residues 57-79 (FMCSECGSLYNTLEEVLSHQEQH), 108-130 (FQCGECSQLILSPGELLAHQDAH), and 140-163 (YQCWDCQELFPSPELWVAHRKAQH). 2 disordered regions span residues 168 to 196 (VAEPPVPPPLPPPTPLPPPSPPSEVKMEP) and 217 to 304 (GTHF…ATHP). Pro residues predominate over residues 171 to 189 (PPVPPPLPPPTPLPPPSPP). The C2H2-type 4 zinc-finger motif lies at 197–219 (YECPECSTLCATPEEFLEHQGTH). The segment covering 217–231 (GTHFDSLEKEERNGL) has biased composition (basic and acidic residues). Acidic residues predominate over residues 232–263 (EEEEEDDEEDEEDDEEMEDEEAMAEVGDDAVG). C2H2-type zinc fingers lie at residues 305–327 (FHCSQCQRSFSSANRLQAHGRAH), 332–354 (HECTTCSKVFKKAASLEQHLRLH), 360–382 (YLCVDCGRGFGTELTLVAHRRAH), 388–409 (HRCRCGKTFSNMTKFLYHRRTH), 442–465 (LPCPQCSKSFASASRLSRHRRAVH), 472–494 (HRCGVCGKGFKKLIHVRNHLRTH), 500–522 (FQCHSCGKTFASLANLSRHQLTH), 528–550 (YQCLDCGKRFTQSSNLQQHRRLH), and 573–595 (YYCGTCGRWFRAMAGLRLHQRVH). The interval 409-443 (HAGKSGAPPTGATAPPAPAEPTPPPPPPAPPAQLP) is disordered. Over residues 423-442 (PPAPAEPTPPPPPPAPPAQL) the composition is skewed to pro residues. The tract at residues 601–621 (LTLQPPRSPSPAPPPPPEPQQ) is disordered. Over residues 606–619 (PRSPSPAPPPPPEP) the composition is skewed to pro residues.

This sequence belongs to the krueppel C2H2-type zinc-finger protein family. As to expression, widely expressed.

The protein localises to the nucleus. Its function is as follows. May be involved in transcriptional regulation. The polypeptide is Zinc finger protein 526 (ZNF526) (Homo sapiens (Human)).